We begin with the raw amino-acid sequence, 367 residues long: Glutamate 5-kinase (367 aa).

Lys10 contacts ATP. Residues Ser50, Asp137, and Asn149 each contribute to the substrate site. ATP-binding positions include Thr169 to Asp170 and Thr211 to Lys217. The PUA domain maps to Ala275–Glu353.

This sequence belongs to the glutamate 5-kinase family.

It is found in the cytoplasm. It catalyses the reaction L-glutamate + ATP = L-glutamyl 5-phosphate + ADP. The protein operates within amino-acid biosynthesis; L-proline biosynthesis; L-glutamate 5-semialdehyde from L-glutamate: step 1/2. Its function is as follows. Catalyzes the transfer of a phosphate group to glutamate to form L-glutamate 5-phosphate. In Serratia proteamaculans (strain 568), this protein is Glutamate 5-kinase.